The primary structure comprises 161 residues: Allophycocyanin subunit alpha-B (161 aa).

N4-methylasparagine is present on asparagine 71. Cysteine 81 is a binding site for (2R,3E)-phycocyanobilin.

This sequence belongs to the phycobiliprotein family. Heterodimer of an alpha-B and a beta chain forming AP-B. Contains one covalently linked bilin chromophore. The chromophore is added by phycocyanobilin lyase CpcUS.

The protein resides in the cellular thylakoid membrane. A variant alpha-allophycocyanin (AP) which forms a complex with beta-AP with maximum absorption at approximately 670 nanometers. It is an important phycobilisome terminal emitter involved in energy transfer to photosystem I. The polypeptide is Allophycocyanin subunit alpha-B (apcD) (Picosynechococcus sp. (strain ATCC 27264 / PCC 7002 / PR-6) (Agmenellum quadruplicatum)).